A 446-amino-acid polypeptide reads, in one-letter code: MLKHSSAATKENDSPKLKVLDIVSKLEPSLDHSHTHWWKLTSPQLALMLEAADYSIEKQFETLLFHYHWVVPYLGPKPDADGNFKWRSLVSDVGIPLEYSWKWDTATSGPDVRLTIEPINELSGTRVDPLNQAPSLELLHRLAEILPRLDVSWASHFLSTFYDHDKLKYIKESESETGMPLRSTMLVCFEFGRNGITTKTYMSPRKLGQQGFAPLSDYHSAIAALGPSCALDAVTEFLNNSPEGPHLSPFMLAVDNIIPCSSRLKLYFATPRTSYNSIREVLTLGGRLSTVTLESKLRAIHELVKAIMPFPPDLPDDADIPFPEQVLSPTVQDLAESSDMANQRPAFVAGYQYYFDIAPGASLPDIKFYIPIRKAQMNDQAVATGLTNWMRAQGRGAFCNAYTRVLEGLAGGRDLSKCHGLHTHICVMLKGNGEFDVTSYLAPGCK.

Positions 113, 199, 201, 263, 265, 267, 369, and 440 each coordinate dimethylallyl diphosphate.

It belongs to the tryptophan dimethylallyltransferase family.

It functions in the pathway secondary metabolite biosynthesis. Its function is as follows. Xanthone prenyltransferase involved in the conversion of monodictyphenone to the prenyl xanthones such as emericellin, shamixanthone and epishamixanthone. Monodictyphenone is first converted to variecoxanthone A via a paeciloxanthone intermediate by the consecutive actions of the FAD-dependent monooxygenase mdpD and the xanthone prenyltransferase xptB. XptB catalyzes regular O-prenylation at the hydroxy group of C-7 of the xanthone ring. Variecoxanthone A is further prenylated to emericellin by xptA before being reduced to shamixanthone and epishamixanthone by the dehydrogenase xptC. In Emericella nidulans (strain FGSC A4 / ATCC 38163 / CBS 112.46 / NRRL 194 / M139) (Aspergillus nidulans), this protein is Xanthone prenyltransferase A.